The chain runs to 260 residues: NH(3)-dependent NAD(+) synthetase (260 aa).

Residue 31 to 38 (GLSGGLDS) participates in ATP binding. Residue Asp-37 coordinates Mg(2+). Arg-112 is a binding site for deamido-NAD(+). ATP is bound at residue Thr-132. Glu-137 is a binding site for Mg(2+). The ATP site is built by Lys-161 and Ser-183.

Belongs to the NAD synthetase family. As to quaternary structure, homodimer.

The enzyme catalyses deamido-NAD(+) + NH4(+) + ATP = AMP + diphosphate + NAD(+) + H(+). The protein operates within cofactor biosynthesis; NAD(+) biosynthesis; NAD(+) from deamido-NAD(+) (ammonia route): step 1/1. Its function is as follows. Catalyzes the ATP-dependent amidation of deamido-NAD to form NAD. Uses ammonia as a nitrogen source. The protein is NH(3)-dependent NAD(+) synthetase of Helicobacter pylori (strain HPAG1).